Consider the following 573-residue polypeptide: NADP-dependent malic enzyme, chloroplastic (573 aa).

Tyr-123 (proton donor) is an active-site residue. Residue Arg-176 participates in NAD(+) binding. The active-site Proton acceptor is the Lys-194. A divalent metal cation contacts are provided by Glu-265, Asp-266, and Asp-289. Asp-289 is an NAD(+) binding site. Position 318–334 (318–334 (LFLGAGEAGTGIAELIA)) interacts with NADP(+). Asn-430 is an NAD(+) binding site.

The protein belongs to the malic enzymes family. In terms of assembly, homotetramer. Mg(2+) serves as cofactor. The cofactor is Mn(2+).

The protein resides in the plastid. The protein localises to the chloroplast. It carries out the reaction (S)-malate + NADP(+) = pyruvate + CO2 + NADPH. The enzyme catalyses oxaloacetate + H(+) = pyruvate + CO2. The protein operates within photosynthesis; C4 acid pathway. Its function is as follows. The chloroplastic ME isoform decarboxylates malate shuttled from neighboring mesophyll cells. The CO(2) released is then refixed by ribulose-bisphosphate carboxylase. This pathway eliminates the photorespiratory loss of CO(2) that occurs in most plants. The sequence is that of NADP-dependent malic enzyme, chloroplastic from Solanum lycopersicum (Tomato).